The primary structure comprises 443 residues: Trigger factor (443 aa).

In terms of domain architecture, PPIase FKBP-type spans Gly161 to Pro246.

Belongs to the FKBP-type PPIase family. Tig subfamily.

It localises to the cytoplasm. It catalyses the reaction [protein]-peptidylproline (omega=180) = [protein]-peptidylproline (omega=0). Involved in protein export. Acts as a chaperone by maintaining the newly synthesized protein in an open conformation. Functions as a peptidyl-prolyl cis-trans isomerase. The sequence is that of Trigger factor from Legionella pneumophila subsp. pneumophila (strain Philadelphia 1 / ATCC 33152 / DSM 7513).